The sequence spans 458 residues: ATP synthase subunit beta (458 aa).

148 to 155 (GGAGVGKT) is a binding site for ATP.

This sequence belongs to the ATPase alpha/beta chains family. As to quaternary structure, F-type ATPases have 2 components, CF(1) - the catalytic core - and CF(0) - the membrane proton channel. CF(1) has five subunits: alpha(3), beta(3), gamma(1), delta(1), epsilon(1). CF(0) has three main subunits: a(1), b(2) and c(9-12). The alpha and beta chains form an alternating ring which encloses part of the gamma chain. CF(1) is attached to CF(0) by a central stalk formed by the gamma and epsilon chains, while a peripheral stalk is formed by the delta and b chains.

It is found in the cell inner membrane. It carries out the reaction ATP + H2O + 4 H(+)(in) = ADP + phosphate + 5 H(+)(out). Its function is as follows. Produces ATP from ADP in the presence of a proton gradient across the membrane. The catalytic sites are hosted primarily by the beta subunits. In Francisella tularensis subsp. tularensis (strain FSC 198), this protein is ATP synthase subunit beta.